Here is a 125-residue protein sequence, read N- to C-terminus: Holo-[acyl-carrier-protein] synthase (125 aa).

Residues D8 and E57 each coordinate Mg(2+).

It belongs to the P-Pant transferase superfamily. AcpS family. The cofactor is Mg(2+).

The protein localises to the cytoplasm. It catalyses the reaction apo-[ACP] + CoA = holo-[ACP] + adenosine 3',5'-bisphosphate + H(+). Its function is as follows. Transfers the 4'-phosphopantetheine moiety from coenzyme A to a Ser of acyl-carrier-protein. This chain is Holo-[acyl-carrier-protein] synthase, found in Halothermothrix orenii (strain H 168 / OCM 544 / DSM 9562).